We begin with the raw amino-acid sequence, 102 residues long: MIKSELVQIVAARNPHLYHRDVENIVNAVLDEITDALAAGNRVELRGFGAFSVKNRPSRSGRNPRTGDTVFVEEKWVPFFKTGKELRERLNPGAGDEDDDDN.

Belongs to the bacterial histone-like protein family. In terms of assembly, heterodimer of an alpha and a beta chain.

In terms of biological role, this protein is one of the two subunits of integration host factor, a specific DNA-binding protein that functions in genetic recombination as well as in transcriptional and translational control. This chain is Integration host factor subunit beta, found in Rhizobium rhizogenes (strain K84 / ATCC BAA-868) (Agrobacterium radiobacter).